The chain runs to 420 residues: DNA replication and repair protein RecF (420 aa).

30–37 (GRNGQGKT) lines the ATP pocket. The interval 175–214 (RKGGFARKGGFAPLGPPEGRPEGPPEGRTGGSATSGPPSR) is disordered.

The protein belongs to the RecF family.

The protein localises to the cytoplasm. In terms of biological role, the RecF protein is involved in DNA metabolism; it is required for DNA replication and normal SOS inducibility. RecF binds preferentially to single-stranded, linear DNA. It also seems to bind ATP. The sequence is that of DNA replication and repair protein RecF from Nocardioides sp. (strain ATCC BAA-499 / JS614).